The following is a 256-amino-acid chain: Phosphonates import ATP-binding protein PhnC (256 aa).

An ABC transporter domain is found at 7 to 251 (IEMKNVTKVY…VFDNIYNGGK (245 aa)). 40 to 47 (GLSGAGKS) is a binding site for ATP.

It belongs to the ABC transporter superfamily. Phosphonates importer (TC 3.A.1.9.1) family. In terms of assembly, the complex is composed of two ATP-binding proteins (PhnC), two transmembrane proteins (PhnE) and a solute-binding protein (PhnD).

The protein localises to the cell membrane. It catalyses the reaction phosphonate(out) + ATP + H2O = phosphonate(in) + ADP + phosphate + H(+). Its function is as follows. Part of the ABC transporter complex PhnCDE involved in phosphonates import. Responsible for energy coupling to the transport system. This is Phosphonates import ATP-binding protein PhnC from Lactobacillus delbrueckii subsp. bulgaricus (strain ATCC 11842 / DSM 20081 / BCRC 10696 / JCM 1002 / NBRC 13953 / NCIMB 11778 / NCTC 12712 / WDCM 00102 / Lb 14).